A 162-amino-acid polypeptide reads, in one-letter code: Eukaryotic translation initiation factor 5 (162 aa).

Residues 59–162 (PPNLNPAVQG…EKDRMDIFYE (104 aa)) form a disordered region. Polar residues predominate over residues 85–109 (GDTNGDTSQVDDQNESLEASVNENS). Over residues 148-162 (DLEKREKDRMDIFYE) the composition is skewed to basic and acidic residues.

It belongs to the eIF-2-beta/eIF-5 family.

Catalyzes the hydrolysis of GTP bound to the 40S ribosomal initiation complex (40S.mRNA.Met-tRNA[F].eIF-2.GTP) with the subsequent joining of a 60S ribosomal subunit resulting in the release of eIF-2 and the guanine nucleotide. The subsequent joining of a 60S ribosomal subunit results in the formation of a functional 80S initiation complex (80S.mRNA.Met-tRNA[F]). The protein is Eukaryotic translation initiation factor 5 of Tribolium castaneum (Red flour beetle).